Consider the following 232-residue polypeptide: Phosphatidylserine decarboxylase proenzyme (232 aa).

Residue serine 190 is the Schiff-base intermediate with substrate; via pyruvic acid of the active site. Serine 190 carries the post-translational modification Pyruvic acid (Ser); by autocatalysis.

The protein belongs to the phosphatidylserine decarboxylase family. PSD-A subfamily. In terms of assembly, heterodimer of a large membrane-associated beta subunit and a small pyruvoyl-containing alpha subunit. It depends on pyruvate as a cofactor. In terms of processing, is synthesized initially as an inactive proenzyme. Formation of the active enzyme involves a self-maturation process in which the active site pyruvoyl group is generated from an internal serine residue via an autocatalytic post-translational modification. Two non-identical subunits are generated from the proenzyme in this reaction, and the pyruvate is formed at the N-terminus of the alpha chain, which is derived from the carboxyl end of the proenzyme. The post-translation cleavage follows an unusual pathway, termed non-hydrolytic serinolysis, in which the side chain hydroxyl group of the serine supplies its oxygen atom to form the C-terminus of the beta chain, while the remainder of the serine residue undergoes an oxidative deamination to produce ammonia and the pyruvoyl prosthetic group on the alpha chain.

It is found in the cell membrane. It catalyses the reaction a 1,2-diacyl-sn-glycero-3-phospho-L-serine + H(+) = a 1,2-diacyl-sn-glycero-3-phosphoethanolamine + CO2. It functions in the pathway phospholipid metabolism; phosphatidylethanolamine biosynthesis; phosphatidylethanolamine from CDP-diacylglycerol: step 2/2. Functionally, catalyzes the formation of phosphatidylethanolamine (PtdEtn) from phosphatidylserine (PtdSer). This chain is Phosphatidylserine decarboxylase proenzyme, found in Bartonella henselae (strain ATCC 49882 / DSM 28221 / CCUG 30454 / Houston 1) (Rochalimaea henselae).